The primary structure comprises 128 residues: CD59 glycoprotein (128 aa).

The N-terminal stretch at 1-25 (MGIQGGSVLFGLLLVLAVFCHSGHS) is a signal peptide. Residues 26-108 (LQCYNCPNPT…QLENGGTSLS (83 aa)) enclose the UPAR/Ly6 domain. 5 disulfides stabilise this stretch: cysteine 28/cysteine 51, cysteine 31/cysteine 38, cysteine 44/cysteine 64, cysteine 70/cysteine 88, and cysteine 89/cysteine 94. Asparagine 43 is a glycosylation site (N-linked (GlcNAc...) asparagine). Asparagine 102 carries GPI-anchor amidated asparagine lipidation. Positions 103 to 128 (GGTSLSEKTVVLLVTLLLAAAWCLHP) are cleaved as a propeptide — removed in mature form.

As to quaternary structure, interacts with T-cell surface antigen CD2. Post-translationally, N- and O-glycosylated.

It is found in the cell membrane. The protein resides in the secreted. Its function is as follows. Potent inhibitor of the complement membrane attack complex (MAC) action, which protects self-cells from damage during complement activation. Acts by binding to the beta-haipins of C8 (C8A and C8B) components of the assembling MAC, forming an intermolecular beta-sheet that prevents incorporation of the multiple copies of C9 required for complete formation of the osmolytic pore. This is CD59 glycoprotein from Chlorocebus aethiops (Green monkey).